We begin with the raw amino-acid sequence, 283 residues long: Bifunctional protein FolD (283 aa).

Residues 164–166 and Ser-189 each bind NADP(+); that span reads GRS.

Belongs to the tetrahydrofolate dehydrogenase/cyclohydrolase family. As to quaternary structure, homodimer.

It catalyses the reaction (6R)-5,10-methylene-5,6,7,8-tetrahydrofolate + NADP(+) = (6R)-5,10-methenyltetrahydrofolate + NADPH. It carries out the reaction (6R)-5,10-methenyltetrahydrofolate + H2O = (6R)-10-formyltetrahydrofolate + H(+). It functions in the pathway one-carbon metabolism; tetrahydrofolate interconversion. Catalyzes the oxidation of 5,10-methylenetetrahydrofolate to 5,10-methenyltetrahydrofolate and then the hydrolysis of 5,10-methenyltetrahydrofolate to 10-formyltetrahydrofolate. This Lactobacillus acidophilus (strain ATCC 700396 / NCK56 / N2 / NCFM) protein is Bifunctional protein FolD.